The following is a 336-amino-acid chain: tRNA N6-adenosine threonylcarbamoyltransferase (336 aa).

Fe cation-binding residues include His-114 and His-118. Substrate is bound by residues 136–140, Asp-169, Gly-182, Asp-186, and Asn-275; that span reads LVSGG. Asp-302 contributes to the Fe cation binding site.

It belongs to the KAE1 / TsaD family. Fe(2+) is required as a cofactor.

The protein localises to the cytoplasm. It catalyses the reaction L-threonylcarbamoyladenylate + adenosine(37) in tRNA = N(6)-L-threonylcarbamoyladenosine(37) in tRNA + AMP + H(+). Its function is as follows. Required for the formation of a threonylcarbamoyl group on adenosine at position 37 (t(6)A37) in tRNAs that read codons beginning with adenine. Is involved in the transfer of the threonylcarbamoyl moiety of threonylcarbamoyl-AMP (TC-AMP) to the N6 group of A37, together with TsaE and TsaB. TsaD likely plays a direct catalytic role in this reaction. The sequence is that of tRNA N6-adenosine threonylcarbamoyltransferase from Streptococcus agalactiae serotype III (strain NEM316).